The following is a 69-amino-acid chain: Small ribosomal subunit protein bS21 (69 aa).

The segment at 50-69 is disordered; the sequence is KAFKRKQAKKVRKLKQKTNR.

The protein belongs to the bacterial ribosomal protein bS21 family.

In Borrelia garinii subsp. bavariensis (strain ATCC BAA-2496 / DSM 23469 / PBi) (Borreliella bavariensis), this protein is Small ribosomal subunit protein bS21.